A 336-amino-acid chain; its full sequence is Glucokinase (336 aa).

ATP is bound at residue 12–17 (ADIGGT).

The protein belongs to the bacterial glucokinase family.

It localises to the cytoplasm. It catalyses the reaction D-glucose + ATP = D-glucose 6-phosphate + ADP + H(+). In Helicobacter acinonychis (strain Sheeba), this protein is Glucokinase.